The primary structure comprises 141 residues: Hemoglobin subunit alpha (141 aa).

The region spanning 1-141 (VLSAADKTNV…VSTVLTSKYR (141 aa)) is the Globin domain. Residue S3 is modified to Phosphoserine. K7 carries the N6-succinyllysine modification. The residue at position 8 (T8) is a Phosphothreonine. Position 11 is an N6-succinyllysine (K11). K16 is modified (N6-acetyllysine; alternate). K16 carries the post-translational modification N6-succinyllysine; alternate. Y24 carries the phosphotyrosine modification. The residue at position 35 (S35) is a Phosphoserine. K40 carries the post-translational modification N6-succinyllysine. S49 is modified (phosphoserine). H58 contributes to the O2 binding site. H87 lines the heme b pocket. At S102 the chain carries Phosphoserine. At T108 the chain carries Phosphothreonine. 2 positions are modified to phosphoserine: S124 and S131. Residues T134 and T137 each carry the phosphothreonine modification. Phosphoserine is present on S138.

The protein belongs to the globin family. As to quaternary structure, heterotetramer of two alpha chains and two beta chains. As to expression, red blood cells.

Involved in oxygen transport from the lung to the various peripheral tissues. The protein is Hemoglobin subunit alpha of Tamiasciurus hudsonicus (American red squirrel).